We begin with the raw amino-acid sequence, 872 residues long: Alanine--tRNA ligase (872 aa).

Zn(2+) is bound by residues His-567, His-571, Cys-669, and His-673.

It belongs to the class-II aminoacyl-tRNA synthetase family. It depends on Zn(2+) as a cofactor.

The protein localises to the cytoplasm. It carries out the reaction tRNA(Ala) + L-alanine + ATP = L-alanyl-tRNA(Ala) + AMP + diphosphate. In terms of biological role, catalyzes the attachment of alanine to tRNA(Ala) in a two-step reaction: alanine is first activated by ATP to form Ala-AMP and then transferred to the acceptor end of tRNA(Ala). Also edits incorrectly charged Ser-tRNA(Ala) and Gly-tRNA(Ala) via its editing domain. The polypeptide is Alanine--tRNA ligase (Streptococcus pneumoniae (strain Hungary19A-6)).